We begin with the raw amino-acid sequence, 146 residues long: Snake venom vascular endothelial growth factor toxin (146 aa).

The signal sequence occupies residues 1-24 (MAAYLLAVAILFCIQGWPLGTVQG). Glutamine 25 is modified (pyrrolidone carboxylic acid). 3 cysteine pairs are disulfide-bonded: cysteine 38/cysteine 80, cysteine 69/cysteine 115, and cysteine 73/cysteine 117. The interval 118 to 146 (RPRSASGVNSRKHKRNPEEGEQRAKFPFV) is disordered. The segment covering 133–146 (NPEEGEQRAKFPFV) has biased composition (basic and acidic residues).

The protein belongs to the PDGF/VEGF growth factor family. Snake venom VEGF subfamily. Homodimer; disulfide-linked. Interacts with VEGF receptor-1 (FLT1) with a high affinity, whereas it binds to VEGF receptor-2 (KDR) with a low affinity. Does not bind VEGF receptor-3 (FLT4). Expressed by the venom gland.

The protein localises to the secreted. In terms of biological role, snake venom VEGFs that may contribute to venom dispersion and prey subjugation by inducing vascular permeability and hypotension. This protein induces an increase in capillary permeability after intradermal injection, as well as a drastic hypotensive effect after intravenous injection. The hypotension is mediated by nitric oxide (NO), which is produced by VEGF-activated endothelium NO synthase. Also induces angiogenesis in vitro. Like other crotalid VEGFs, this protein interacts with VEGF receptor-1 (FLT1) with a high affinity, whereas it binds to VEGF receptor-2 (KDR) with a low affinity. The protein is Snake venom vascular endothelial growth factor toxin of Bothrops erythromelas (Caatinga lance head).